Consider the following 86-residue polypeptide: Small ribosomal subunit protein bS20 (86 aa).

It belongs to the bacterial ribosomal protein bS20 family.

Its function is as follows. Binds directly to 16S ribosomal RNA. The protein is Small ribosomal subunit protein bS20 of Exiguobacterium sibiricum (strain DSM 17290 / CCUG 55495 / CIP 109462 / JCM 13490 / 255-15).